Reading from the N-terminus, the 1013-residue chain is GPI ethanolamine phosphate transferase 3 (1013 aa).

Residues 41-61 traverse the membrane as a helical segment; sequence TLYIFLYSALAALQFIAIAFF. N-linked (GlcNAc...) asparagine glycans are attached at residues Asn184, Asn205, Asn336, Asn399, and Asn423. 3 consecutive transmembrane segments (helical) span residues 447–467, 484–504, and 515–535; these read YYSI…LITI, VPTI…VFYV, and LWAS…VPIF. Asn539 is a glycosylation site (N-linked (GlcNAc...) asparagine). Helical transmembrane passes span 558 to 578, 582 to 602, 643 to 663, and 682 to 702; these read VAAF…FTIW, IVSF…VFLP, IVGG…SLIT, and NYSF…PACI. Asn707 carries an N-linked (GlcNAc...) asparagine glycan. Residues 715 to 735 traverse the membrane as a helical segment; sequence AAPIWIGMLMKSILFVNFIYW. Asn742, Asn750, and Asn755 each carry an N-linked (GlcNAc...) asparagine glycan. A run of 7 helical transmembrane segments spans residues 761-781, 802-822, 825-845, 868-888, 899-919, 943-963, and 977-997; these read IVVG…PLCI, NAYG…ILLF, PLAQ…LEIF, FFST…GFIL, LGIV…VALL, GMLL…VTNF, and FMFA…ITIA.

It belongs to the PIGG/PIGN/PIGO family. PIGO subfamily.

Its subcellular location is the endoplasmic reticulum membrane. Its pathway is glycolipid biosynthesis; glycosylphosphatidylinositol-anchor biosynthesis. Its function is as follows. Involved in glycosylphosphatidylinositol-anchor biosynthesis. Transfers ethanolamine phosphate to the GPI third mannose which links the GPI-anchor to the C-terminus of the proteins by an amide bond. Involved in cell wall biosynthesis. The protein is GPI ethanolamine phosphate transferase 3 (GPI13) of Eremothecium gossypii (strain ATCC 10895 / CBS 109.51 / FGSC 9923 / NRRL Y-1056) (Yeast).